Reading from the N-terminus, the 237-residue chain is Ribosomal RNA large subunit methyltransferase E (237 aa).

The S-adenosyl-L-methionine site is built by Gly-76, Trp-78, Asp-99, Asp-115, and Asp-139. Lys-179 serves as the catalytic Proton acceptor.

It belongs to the class I-like SAM-binding methyltransferase superfamily. RNA methyltransferase RlmE family.

The protein localises to the cytoplasm. The enzyme catalyses uridine(2552) in 23S rRNA + S-adenosyl-L-methionine = 2'-O-methyluridine(2552) in 23S rRNA + S-adenosyl-L-homocysteine + H(+). In terms of biological role, specifically methylates the uridine in position 2552 of 23S rRNA at the 2'-O position of the ribose in the fully assembled 50S ribosomal subunit. The polypeptide is Ribosomal RNA large subunit methyltransferase E (Rhodopseudomonas palustris (strain ATCC BAA-98 / CGA009)).